We begin with the raw amino-acid sequence, 358 residues long: E3 ubiquitin-protein ligase SIS3 (358 aa).

The first 27 residues, 1 to 27, serve as a signal peptide directing secretion; it reads MAMRGVDFKWYDGFFLSMLATSVIIVA. Transmembrane regions (helical) follow at residues 40 to 60, 85 to 105, and 125 to 145; these read LHIWIVVDYTTVFIFRVFMFV, VVVLSVLSLLLYPFLWAWTVI, and GFLIWLMFSYCGLLCIAFICV. Residues 235-276 form an RING-type; atypical zinc finger; sequence CLICLEEFHIGHEVRGLPCAHNFHVECIDQWLRLNVKCPRCR. Residues 336 to 358 form a disordered region; the sequence is TALETAENGGVPPVLTDLSPSRR.

Expressed in roots, stems, leaves, flowers and siliques.

The protein resides in the membrane. It carries out the reaction S-ubiquitinyl-[E2 ubiquitin-conjugating enzyme]-L-cysteine + [acceptor protein]-L-lysine = [E2 ubiquitin-conjugating enzyme]-L-cysteine + N(6)-ubiquitinyl-[acceptor protein]-L-lysine.. The protein operates within protein modification; protein ubiquitination. E3 ubiquitin protein ligase that acts as a positive regulator of sugar signaling during early seedling development. Possesses E3 ligase activity in vitro. The chain is E3 ubiquitin-protein ligase SIS3 (SIS3) from Arabidopsis thaliana (Mouse-ear cress).